The sequence spans 191 residues: UPF0149 protein VV1_1551 (191 aa).

Belongs to the UPF0149 family.

This Vibrio vulnificus (strain CMCP6) protein is UPF0149 protein VV1_1551.